We begin with the raw amino-acid sequence, 542 residues long: Plasminogen-binding protein PgbB (542 aa).

The segment at K399 to K542 is disordered. Basic and acidic residues-rich tracts occupy residues Q418–V435 and V447–R456. The segment covering D457–T467 has biased composition (polar residues). Basic and acidic residues predominate over residues N481–K542.

Its subcellular location is the cell surface. Functionally, binds plasminogen, specifically, and in a concentration and lysine-dependent manner. Plasminogen is the precursor of plasmin, a serine protease that cleaves fibrin, fibronectin, laminin and vitronectin. Acquisition of plasminogen/plasmin could enable H.pylori to degrade host components. This chain is Plasminogen-binding protein PgbB (pgbB), found in Helicobacter pylori (strain ATCC 700392 / 26695) (Campylobacter pylori).